The sequence spans 502 residues: Protein DETOXIFICATION 49 (502 aa).

12 consecutive transmembrane segments (helical) span residues 41–61 (LPLI…MLFL), 75–95 (LALG…SIGM), 123–143 (LLCS…LLFF), 153–173 (AEIF…LHPI), 190–210 (AFFA…SLGL), 216–236 (ALGA…YIVF), 267–287 (VSVC…GLLL), 293–313 (VASM…PSSL), 338–358 (RTGL…ALMV), 372–392 (IVKL…GNCP), 414–434 (LCCF…FSGF), and 439–459 (LWLG…VVLA).

Belongs to the multi antimicrobial extrusion (MATE) (TC 2.A.66.1) family.

The protein localises to the membrane. The sequence is that of Protein DETOXIFICATION 49 from Arabidopsis thaliana (Mouse-ear cress).